Here is a 276-residue protein sequence, read N- to C-terminus: MDNAHRQTQAHLDAACFWQIWQRFDKDEKGYIKETELDAFFDDLLAKFGIEDTLMEENVQKMKEQLMVGHDISKEGRILMKELASMFLSEDENFLLFFRLETPLDNSVEFMQIWRKYDADSSGFISAAELSNFLRDLFLHHKKVISEAELEEYTSTMEKIFDRNKDGRLDLNDLARILALQENFLLQFKMDASSTEERKRDFEKIFAHYDVSKTGALEGPEVDGFVKDMMELVQPSISGVDLDKFREILLRHCDVNKDGKIQKSELALCLGLKINP.

EF-hand domains follow at residues 12-47, 105-140, 149-184, 197-232, and 240-276; these read LDAA…LLAK, DNSV…LFLH, ELEE…QENF, ERKR…MMEL, and VDLD…KINP. D118, D120, S122, E129, D162, N164, D166, R168, D173, D210, S212, T214, E221, D254, N256, D258, K260, and E265 together coordinate Ca(2+).

In terms of tissue distribution, highly expressed in pancreas, in particular in pancreatic islets and pancreatic beta-cells. Detected in prostate, adrenal gland, small intestine, stomach and thyroid (at protein level).

The protein localises to the cytoplasm. It is found in the secreted. The protein resides in the cytoplasmic vesicle. It localises to the secretory vesicle membrane. This is Secretagogin (Scgn) from Rattus norvegicus (Rat).